A 50-amino-acid polypeptide reads, in one-letter code: METTNFGFVASLLFVGVPTIFLIGLFISTQDGEKSSFYSDSSKGRLGPKR.

The chain crosses the membrane as a helical span at residues 7–27 (GFVASLLFVGVPTIFLIGLFI).

This sequence belongs to the PsbM family. In terms of assembly, PSII is composed of 1 copy each of membrane proteins PsbA, PsbB, PsbC, PsbD, PsbE, PsbF, PsbH, PsbI, PsbJ, PsbK, PsbL, PsbM, PsbT, PsbX, PsbY, Psb30/Ycf12, peripheral proteins PsbO, CyanoQ (PsbQ), PsbU, PsbV and a large number of cofactors. It forms dimeric complexes.

It is found in the cellular thylakoid membrane. One of the components of the core complex of photosystem II (PSII). PSII is a light-driven water:plastoquinone oxidoreductase that uses light energy to abstract electrons from H(2)O, generating O(2) and a proton gradient subsequently used for ATP formation. It consists of a core antenna complex that captures photons, and an electron transfer chain that converts photonic excitation into a charge separation. This subunit is found at the monomer-monomer interface. This chain is Photosystem II reaction center protein M, found in Prochlorococcus marinus (strain MIT 9301).